The following is an 89-amino-acid chain: Small ribosomal subunit protein uS15 (89 aa).

It belongs to the universal ribosomal protein uS15 family. In terms of assembly, part of the 30S ribosomal subunit. Forms a bridge to the 50S subunit in the 70S ribosome, contacting the 23S rRNA.

One of the primary rRNA binding proteins, it binds directly to 16S rRNA where it helps nucleate assembly of the platform of the 30S subunit by binding and bridging several RNA helices of the 16S rRNA. Its function is as follows. Forms an intersubunit bridge (bridge B4) with the 23S rRNA of the 50S subunit in the ribosome. In Nitratiruptor sp. (strain SB155-2), this protein is Small ribosomal subunit protein uS15.